Reading from the N-terminus, the 470-residue chain is TNF receptor-associated factor 4 (470 aa).

The RING-type zinc finger occupies 18–58 (CPLCGKPMREPVQVSTCGHRFCDTCLQEFLSEGVFKCPEDQ). 3 TRAF-type zinc fingers span residues 101–154 (GHLN…EAYE), 155–208 (SHEG…DTIQ), and 209–267 (SHQY…LAMG). Lysine 263 participates in a covalent cross-link: Glycyl lysine isopeptide (Lys-Gly) (interchain with G-Cter in ubiquitin). Residues 277-310 (HLAMMCALVSRQRQELQELRRELEELSIGSDGVL) are a coiled coil. Residues 307 to 462 (DGVLIWKIGS…DDAVFIRASV (156 aa)) form the MATH domain. At serine 426 the chain carries Phosphoserine.

Belongs to the TNF receptor-associated factor family. B subfamily. As to quaternary structure, homotrimer. Interacts with LTBR/TNFRSF3, NGFR/TNFRSF16, RPS6KB1 and TGFB1I1. Interacts with SMURF1. Interacts (via TRAF domain) with MAP3K4 (via kinase domain). Interacts with NCF1, TICAM1, IRAK1 and TRAF6, and is probably part of a complex containing TRAF4, NCF1, TICAM1, IRAK1 and TRAF6. Interacts (via MATH domain) with GP6 and GP1BB. Interacts with EGFR (via C-terminal region); this interaction promotes the formation of EGFR asymmetric dimers. Interacts with PKM; this interaction promotes PKM kinase activity. In terms of processing, polyubiquitinated, leading to its proteasomal degradation. Ubiquitinated at Lys-263 by the SCF(FBXL2) complex, leading to its degradation by the proteasome. As to expression, predominantly expressed in brain. Preferentially expressed by postmitotic undifferentiated neurons in developing central (CNS) and peripheral (PNS) nervous system, and in nervous tissues of sensory organs. In the embryo, protein expression was shown in brain, thymus, salivary glands and intestine. In the adult, protein expression is restricted to the brain (hippocampus and olfactory bulb).

It localises to the cytoplasm. It is found in the nucleus. Its subcellular location is the perinuclear region. The protein localises to the cell junction. The protein resides in the tight junction. It localises to the cell membrane. It is found in the cytoskeleton. The enzyme catalyses S-ubiquitinyl-[E2 ubiquitin-conjugating enzyme]-L-cysteine + [acceptor protein]-L-lysine = [E2 ubiquitin-conjugating enzyme]-L-cysteine + N(6)-ubiquitinyl-[acceptor protein]-L-lysine.. It functions in the pathway protein degradation; proteasomal ubiquitin-dependent pathway. In terms of biological role, adapter protein with E3 ligase activity that is involved in many diverse biological processes including cell proliferation, migration, differentiation, DNA repair, platelet activation or apoptosis. Promotes EGFR-mediated signaling by facilitating the dimerization of EGFR and downstream AKT activation thereby promoting cell proliferation. Ubiquitinates SMURF2 through 'Lys-48'-linked ubiquitin chain leading to SMURF2 degradation through the proteasome and subsequently osteogenic differentiation. Promotes 'Lys-63'-mediated ubiquitination of CHK1 which in turn activates cell cycle arrest and activation of DNA repair. In addition, promotes an atypical 'Lys-29'-linked ubiquitination at the C-terminal end of IRS1 which is crucial for insulin-like growth factor (IGF) signal transduction. Regulates activation of NF-kappa-B in response to signaling through Toll-like receptors. Required for normal skeleton development, and for normal development of the respiratory tract. Required for activation of RPS6KB1 in response to TNF signaling. Modulates TRAF6 functions. Inhibits adipogenic differentiation by activating pyruvate kinase PKM activity and subsequently the beta-catenin signaling pathway. The sequence is that of TNF receptor-associated factor 4 (Traf4) from Mus musculus (Mouse).